A 239-amino-acid polypeptide reads, in one-letter code: Ubiquinone biosynthesis O-methyltransferase (239 aa).

Arginine 44, glycine 63, aspartate 84, and methionine 128 together coordinate S-adenosyl-L-methionine.

It belongs to the methyltransferase superfamily. UbiG/COQ3 family.

The catalysed reaction is a 3-demethylubiquinol + S-adenosyl-L-methionine = a ubiquinol + S-adenosyl-L-homocysteine + H(+). The enzyme catalyses a 3-(all-trans-polyprenyl)benzene-1,2-diol + S-adenosyl-L-methionine = a 2-methoxy-6-(all-trans-polyprenyl)phenol + S-adenosyl-L-homocysteine + H(+). It participates in cofactor biosynthesis; ubiquinone biosynthesis. Its function is as follows. O-methyltransferase that catalyzes the 2 O-methylation steps in the ubiquinone biosynthetic pathway. This chain is Ubiquinone biosynthesis O-methyltransferase, found in Xanthomonas euvesicatoria pv. vesicatoria (strain 85-10) (Xanthomonas campestris pv. vesicatoria).